The primary structure comprises 237 residues: Pyridoxine 5'-phosphate synthase (237 aa).

2 residues coordinate 3-amino-2-oxopropyl phosphate: Asn-7 and Arg-18. His-43 acts as the Proton acceptor in catalysis. 1-deoxy-D-xylulose 5-phosphate-binding residues include Arg-45 and His-50. The Proton acceptor role is filled by Glu-70. Residue Thr-100 coordinates 1-deoxy-D-xylulose 5-phosphate. His-190 serves as the catalytic Proton donor. 3-amino-2-oxopropyl phosphate contacts are provided by residues Asp-191 and Gly-213–His-214.

The protein belongs to the PNP synthase family. In terms of assembly, homooctamer; tetramer of dimers.

Its subcellular location is the cytoplasm. The catalysed reaction is 3-amino-2-oxopropyl phosphate + 1-deoxy-D-xylulose 5-phosphate = pyridoxine 5'-phosphate + phosphate + 2 H2O + H(+). It functions in the pathway cofactor biosynthesis; pyridoxine 5'-phosphate biosynthesis; pyridoxine 5'-phosphate from D-erythrose 4-phosphate: step 5/5. Its function is as follows. Catalyzes the complicated ring closure reaction between the two acyclic compounds 1-deoxy-D-xylulose-5-phosphate (DXP) and 3-amino-2-oxopropyl phosphate (1-amino-acetone-3-phosphate or AAP) to form pyridoxine 5'-phosphate (PNP) and inorganic phosphate. The polypeptide is Pyridoxine 5'-phosphate synthase (Bacteroides thetaiotaomicron (strain ATCC 29148 / DSM 2079 / JCM 5827 / CCUG 10774 / NCTC 10582 / VPI-5482 / E50)).